Here is a 230-residue protein sequence, read N- to C-terminus: Small ribosomal subunit protein uS7m (230 aa).

Belongs to the universal ribosomal protein uS7 family. In terms of assembly, part of the small ribosomal subunit.

Its subcellular location is the mitochondrion. In terms of biological role, one of the primary rRNA binding proteins, it binds directly to 18S rRNA where it nucleates assembly of the head domain of the small subunit. This chain is Small ribosomal subunit protein uS7m (RPS7), found in Marchantia polymorpha (Common liverwort).